A 206-amino-acid chain; its full sequence is Dephospho-CoA kinase (206 aa).

The region spanning 6-206 (IIGLTGGIAS…KWKWKDWSKK (201 aa)) is the DPCK domain. ATP is bound at residue 14–19 (ASGKST).

The protein belongs to the CoaE family.

The protein resides in the cytoplasm. The catalysed reaction is 3'-dephospho-CoA + ATP = ADP + CoA + H(+). It participates in cofactor biosynthesis; coenzyme A biosynthesis; CoA from (R)-pantothenate: step 5/5. Functionally, catalyzes the phosphorylation of the 3'-hydroxyl group of dephosphocoenzyme A to form coenzyme A. The sequence is that of Dephospho-CoA kinase from Carboxydothermus hydrogenoformans (strain ATCC BAA-161 / DSM 6008 / Z-2901).